Here is a 280-residue protein sequence, read N- to C-terminus: Acetylglutamate kinase (280 aa).

Substrate is bound by residues 64-65 (GG), Arg86, and Asn177.

It belongs to the acetylglutamate kinase family. ArgB subfamily.

Its subcellular location is the cytoplasm. The catalysed reaction is N-acetyl-L-glutamate + ATP = N-acetyl-L-glutamyl 5-phosphate + ADP. Its pathway is amino-acid biosynthesis; L-arginine biosynthesis; N(2)-acetyl-L-ornithine from L-glutamate: step 2/4. Functionally, catalyzes the ATP-dependent phosphorylation of N-acetyl-L-glutamate. This Nautilia profundicola (strain ATCC BAA-1463 / DSM 18972 / AmH) protein is Acetylglutamate kinase.